A 309-amino-acid polypeptide reads, in one-letter code: 4-hydroxy-3-methylbut-2-enyl diphosphate reductase (309 aa).

Residue Cys12 coordinates [4Fe-4S] cluster. His41 and His74 together coordinate (2E)-4-hydroxy-3-methylbut-2-enyl diphosphate. Dimethylallyl diphosphate-binding residues include His41 and His74. Isopentenyl diphosphate-binding residues include His41 and His74. Residue Cys96 participates in [4Fe-4S] cluster binding. His124 is a binding site for (2E)-4-hydroxy-3-methylbut-2-enyl diphosphate. A dimethylallyl diphosphate-binding site is contributed by His124. His124 provides a ligand contact to isopentenyl diphosphate. The active-site Proton donor is Glu126. Thr167 serves as a coordination point for (2E)-4-hydroxy-3-methylbut-2-enyl diphosphate. Cys197 contacts [4Fe-4S] cluster. Residues Ser225, Ser226, Asn227, and Ser269 each coordinate (2E)-4-hydroxy-3-methylbut-2-enyl diphosphate. Ser225, Ser226, Asn227, and Ser269 together coordinate dimethylallyl diphosphate. The isopentenyl diphosphate site is built by Ser225, Ser226, Asn227, and Ser269.

Belongs to the IspH family. [4Fe-4S] cluster serves as cofactor.

The catalysed reaction is isopentenyl diphosphate + 2 oxidized [2Fe-2S]-[ferredoxin] + H2O = (2E)-4-hydroxy-3-methylbut-2-enyl diphosphate + 2 reduced [2Fe-2S]-[ferredoxin] + 2 H(+). It carries out the reaction dimethylallyl diphosphate + 2 oxidized [2Fe-2S]-[ferredoxin] + H2O = (2E)-4-hydroxy-3-methylbut-2-enyl diphosphate + 2 reduced [2Fe-2S]-[ferredoxin] + 2 H(+). Its pathway is isoprenoid biosynthesis; dimethylallyl diphosphate biosynthesis; dimethylallyl diphosphate from (2E)-4-hydroxy-3-methylbutenyl diphosphate: step 1/1. It functions in the pathway isoprenoid biosynthesis; isopentenyl diphosphate biosynthesis via DXP pathway; isopentenyl diphosphate from 1-deoxy-D-xylulose 5-phosphate: step 6/6. Catalyzes the conversion of 1-hydroxy-2-methyl-2-(E)-butenyl 4-diphosphate (HMBPP) into a mixture of isopentenyl diphosphate (IPP) and dimethylallyl diphosphate (DMAPP). Acts in the terminal step of the DOXP/MEP pathway for isoprenoid precursor biosynthesis. The polypeptide is 4-hydroxy-3-methylbut-2-enyl diphosphate reductase (Pseudoalteromonas translucida (strain TAC 125)).